The primary structure comprises 200 residues: Somatotropin (200 aa).

Residues 1–22 (MARVLVVLSVVVASLFFSQGAT) form the signal peptide. Residue H38 coordinates Zn(2+). C71 and C173 are joined by a disulfide. A Zn(2+)-binding site is contributed by E182. A disulfide bond links C190 and C198.

Belongs to the somatotropin/prolactin family.

It is found in the secreted. In terms of biological role, growth hormone plays an important role in growth control and is involved in the regulation of several anabolic processes. Implicated as an osmoregulatory substance important for seawater adaptation. This Heteropneustes fossilis (Stinging catfish) protein is Somatotropin (gh).